Here is a 156-residue protein sequence, read N- to C-terminus: E3 ubiquitin-protein ligase LAP (156 aa).

An RING-CH-type zinc finger spans residues Met-1–Lys-55. The Cytoplasmic segment spans residues Met-1–Thr-73. Residues Cys-5, Cys-8, Cys-19, Cys-21, His-29, Cys-32, Cys-45, and Cys-48 each coordinate Zn(2+). Residues Thr-74–Leu-94 form a helical membrane-spanning segment. Residues Ser-95–Ser-111 are Lumenal-facing. Residues Ile-112–Val-132 form a helical membrane-spanning segment. The Cytoplasmic portion of the chain corresponds to Val-133–Val-156.

It belongs to the poxviridae LAP protein family.

It is found in the host membrane. The protein resides in the host Golgi apparatus. Its subcellular location is the host trans-Golgi network membrane. The protein localises to the host early endosome membrane. The catalysed reaction is S-ubiquitinyl-[E2 ubiquitin-conjugating enzyme]-L-cysteine + [acceptor protein]-L-lysine = [E2 ubiquitin-conjugating enzyme]-L-cysteine + N(6)-ubiquitinyl-[acceptor protein]-L-lysine.. Its function is as follows. E3 ubiquitin-protein ligase which promotes ubiquitination and subsequent degradation of host MHC-I and CD4 molecules, presumably to prevent lysis of infected cells by cytotoxic T-lymphocytes and NK cell. Binds target molecules through transmembrane interaction. The result of this ubiquitination is the enhancement of the endocytosis of the target chain and the delivery to the lysosome, where it is proteolytically destroyed. The protein is E3 ubiquitin-protein ligase LAP of Yaba-like disease virus (YLDV).